Consider the following 517-residue polypeptide: GMP synthase [glutamine-hydrolyzing] (517 aa).

The region spanning 4–193 is the Glutamine amidotransferase type-1 domain; the sequence is KIIILDFGSQ…VVDICGGKQD (190 aa). The active-site Nucleophile is the Cys79. Catalysis depends on residues His167 and Glu169. The GMPS ATP-PPase domain maps to 194–382; that stretch reads WSAASFIETT…LGMPEHLITR (189 aa). 221-227 contributes to the ATP binding site; it reads SGGVDSS.

As to quaternary structure, homodimer.

It carries out the reaction XMP + L-glutamine + ATP + H2O = GMP + L-glutamate + AMP + diphosphate + 2 H(+). It participates in purine metabolism; GMP biosynthesis; GMP from XMP (L-Gln route): step 1/1. Functionally, catalyzes the synthesis of GMP from XMP. This chain is GMP synthase [glutamine-hydrolyzing], found in Phocaeicola vulgatus (strain ATCC 8482 / DSM 1447 / JCM 5826 / CCUG 4940 / NBRC 14291 / NCTC 11154) (Bacteroides vulgatus).